Here is a 283-residue protein sequence, read N- to C-terminus: Lysozyme-like protein 7 (283 aa).

The first 18 residues, 1–18, serve as a signal peptide directing secretion; it reads MAHKSIVIFSVLAVLCHS. Residues 53–273 form the Ch-type lysozyme domain; it reads YAYALDIYVQ…AVEEDGKIYA (221 aa).

Belongs to the glycosyl hydrolase 25 family. Expressed in intestine. Expressed in rectal gland cells and head neurons.

Functionally, plays a role in resistance to Gram-positive bacteria B.thuringiensis and M.nematophilum and Gram-negative bacteria S.boydii or S.flexneri infection and to fungus C.neoformans infection. Plays a role in susceptibility to Gram-negative bacterium S.typhimurium infection. The sequence is that of Lysozyme-like protein 7 from Caenorhabditis elegans.